We begin with the raw amino-acid sequence, 258 residues long: Imidazole glycerol phosphate synthase subunit HisF (258 aa).

Catalysis depends on residues Asp-12 and Asp-131.

It belongs to the HisA/HisF family. Heterodimer of HisH and HisF.

The protein resides in the cytoplasm. It catalyses the reaction 5-[(5-phospho-1-deoxy-D-ribulos-1-ylimino)methylamino]-1-(5-phospho-beta-D-ribosyl)imidazole-4-carboxamide + L-glutamine = D-erythro-1-(imidazol-4-yl)glycerol 3-phosphate + 5-amino-1-(5-phospho-beta-D-ribosyl)imidazole-4-carboxamide + L-glutamate + H(+). It participates in amino-acid biosynthesis; L-histidine biosynthesis; L-histidine from 5-phospho-alpha-D-ribose 1-diphosphate: step 5/9. In terms of biological role, IGPS catalyzes the conversion of PRFAR and glutamine to IGP, AICAR and glutamate. The HisF subunit catalyzes the cyclization activity that produces IGP and AICAR from PRFAR using the ammonia provided by the HisH subunit. This Corynebacterium glutamicum (strain R) protein is Imidazole glycerol phosphate synthase subunit HisF.